Consider the following 331-residue polypeptide: tRNA-cytidine(32) 2-sulfurtransferase (331 aa).

Residues 1 to 33 (MNAPHMNDTAADAATLDDAAAPAGRPALTRREQ) form a disordered region. Positions 8 to 23 (DTAADAATLDDAAAPA) are enriched in low complexity. The short motif at 71 to 76 (SGGKDS) is the PP-loop motif element. [4Fe-4S] cluster-binding residues include Cys146, Cys149, and Cys237.

It belongs to the TtcA family. In terms of assembly, homodimer. It depends on Mg(2+) as a cofactor. [4Fe-4S] cluster is required as a cofactor.

Its subcellular location is the cytoplasm. The catalysed reaction is cytidine(32) in tRNA + S-sulfanyl-L-cysteinyl-[cysteine desulfurase] + AH2 + ATP = 2-thiocytidine(32) in tRNA + L-cysteinyl-[cysteine desulfurase] + A + AMP + diphosphate + H(+). Its pathway is tRNA modification. Catalyzes the ATP-dependent 2-thiolation of cytidine in position 32 of tRNA, to form 2-thiocytidine (s(2)C32). The sulfur atoms are provided by the cysteine/cysteine desulfurase (IscS) system. This chain is tRNA-cytidine(32) 2-sulfurtransferase, found in Burkholderia orbicola (strain MC0-3).